The chain runs to 434 residues: Trigger factor (434 aa).

A PPIase FKBP-type domain is found at 160-245 (GDKVKMNFVG…LTEVQAANLP (86 aa)).

It belongs to the FKBP-type PPIase family. Tig subfamily.

The protein localises to the cytoplasm. It catalyses the reaction [protein]-peptidylproline (omega=180) = [protein]-peptidylproline (omega=0). Functionally, involved in protein export. Acts as a chaperone by maintaining the newly synthesized protein in an open conformation. Functions as a peptidyl-prolyl cis-trans isomerase. This Shewanella baltica (strain OS223) protein is Trigger factor.